The following is a 78-amino-acid chain: Small ribosomal subunit protein bS20 (78 aa).

It belongs to the bacterial ribosomal protein bS20 family.

Binds directly to 16S ribosomal RNA. This chain is Small ribosomal subunit protein bS20, found in Streptococcus pneumoniae serotype 19F (strain G54).